The chain runs to 552 residues: Urocanate hydratase (552 aa).

Residues 49-50, Gln-127, 173-175, Asp-193, 239-240, 260-264, 270-271, and Tyr-319 each bind NAD(+); these read GG, GMG, NA, QTSAH, and YV. Cys-407 is a catalytic residue. Residue Gly-489 participates in NAD(+) binding.

This sequence belongs to the urocanase family. Requires NAD(+) as cofactor.

The protein resides in the cytoplasm. It carries out the reaction 4-imidazolone-5-propanoate = trans-urocanate + H2O. It functions in the pathway amino-acid degradation; L-histidine degradation into L-glutamate; N-formimidoyl-L-glutamate from L-histidine: step 2/3. Catalyzes the conversion of urocanate to 4-imidazolone-5-propionate. This Bacillus cytotoxicus (strain DSM 22905 / CIP 110041 / 391-98 / NVH 391-98) protein is Urocanate hydratase.